The sequence spans 180 residues: DNA-directed RNA polymerase subunit Rpo7 (180 aa).

Residues 82–165 (QEVVEGEVLQ…RLPRIALTMR (84 aa)) form the S1 motif domain.

Belongs to the eukaryotic RPB7/RPC8 RNA polymerase subunit family. As to quaternary structure, part of the 13-subunit RNA polymerase complex. Forms a stalk with Rpo4 that extends from the main structure.

It is found in the cytoplasm. The catalysed reaction is RNA(n) + a ribonucleoside 5'-triphosphate = RNA(n+1) + diphosphate. Its function is as follows. DNA-dependent RNA polymerase (RNAP) catalyzes the transcription of DNA into RNA using the four ribonucleoside triphosphates as substrates. The highly mobile Rpo4/Rpo7 heterodimer is conditionally required for transcription initiation. This chain is DNA-directed RNA polymerase subunit Rpo7, found in Saccharolobus shibatae (strain ATCC 51178 / DSM 5389 / JCM 8931 / NBRC 15437 / B12) (Sulfolobus shibatae).